Reading from the N-terminus, the 360-residue chain is Histidinol-phosphate aminotransferase (360 aa).

At Lys213 the chain carries N6-(pyridoxal phosphate)lysine.

This sequence belongs to the class-II pyridoxal-phosphate-dependent aminotransferase family. Histidinol-phosphate aminotransferase subfamily. As to quaternary structure, homodimer. Pyridoxal 5'-phosphate serves as cofactor.

The enzyme catalyses L-histidinol phosphate + 2-oxoglutarate = 3-(imidazol-4-yl)-2-oxopropyl phosphate + L-glutamate. The protein operates within amino-acid biosynthesis; L-histidine biosynthesis; L-histidine from 5-phospho-alpha-D-ribose 1-diphosphate: step 7/9. The sequence is that of Histidinol-phosphate aminotransferase from Baumannia cicadellinicola subsp. Homalodisca coagulata.